Here is a 150-residue protein sequence, read N- to C-terminus: Large ribosomal subunit protein uL13 (150 aa).

Residues 129–150 (PEHPHSAQRPQTLQLNPAASSQ) are disordered. Residues 136–150 (QRPQTLQLNPAASSQ) are compositionally biased toward polar residues.

The protein belongs to the universal ribosomal protein uL13 family. As to quaternary structure, part of the 50S ribosomal subunit.

Its function is as follows. This protein is one of the early assembly proteins of the 50S ribosomal subunit, although it is not seen to bind rRNA by itself. It is important during the early stages of 50S assembly. This chain is Large ribosomal subunit protein uL13, found in Prochlorococcus marinus (strain MIT 9303).